The sequence spans 190 residues: Putative hydrolase YdeN (190 aa).

Active-site charge relay system residues include Ser-71, Asp-137, and His-164.

Belongs to the RBBP9 family.

This chain is Putative hydrolase YdeN (ydeN), found in Bacillus subtilis (strain 168).